Consider the following 88-residue polypeptide: U13-theraphotoxin-Cg1a (88 aa).

An N-terminal signal peptide occupies residues 1 to 21 (MKVSVLITLAVLGVMFVWASA). The propeptide occupies 22-52 (AELEQSGSDQKDSDSPAWLKSMERIFQSEER). Disulfide bonds link C54–C68, C61–C73, and C67–C80.

It belongs to the neurotoxin 10 (Hwtx-1) family. 41 (Jztx-36) subfamily. As to expression, expressed by the venom gland.

Its subcellular location is the secreted. Probable ion channel inhibitor. The chain is U13-theraphotoxin-Cg1a from Chilobrachys guangxiensis (Chinese earth tiger tarantula).